Here is a 274-residue protein sequence, read N- to C-terminus: Large ribosomal subunit protein uL2 (274 aa).

Positions 222 to 274 (GVAMNPVDHPHGGGEGRGKGHHPQSPWGQLAKGYKTRRGKKASDKLIVRRRNG) are disordered. Basic and acidic residues predominate over residues 229–239 (DHPHGGGEGRG).

The protein belongs to the universal ribosomal protein uL2 family. As to quaternary structure, part of the 50S ribosomal subunit. Forms a bridge to the 30S subunit in the 70S ribosome.

One of the primary rRNA binding proteins. Required for association of the 30S and 50S subunits to form the 70S ribosome, for tRNA binding and peptide bond formation. It has been suggested to have peptidyltransferase activity; this is somewhat controversial. Makes several contacts with the 16S rRNA in the 70S ribosome. In Thermosipho melanesiensis (strain DSM 12029 / CIP 104789 / BI429), this protein is Large ribosomal subunit protein uL2.